A 374-amino-acid chain; its full sequence is Tuliposide A-converting enzyme b1, amyloplastic (374 aa).

The transit peptide at Met1–Thr68 directs the protein to the amyloplast. The Acyl-ester intermediate role is filled by Ser226. Catalysis depends on charge relay system residues Asp316 and His348.

The protein belongs to the AB hydrolase superfamily. As to quaternary structure, homodimer. In terms of tissue distribution, highly expressed in pistil and bulb scales. Lower expression in stem, and barely detected in root, leaf, petal and stamen.

It localises to the plastid. It is found in the amyloplast. The enzyme catalyses 6-tuliposide A = tulipalin A + D-glucose. Its function is as follows. Lactone-forming carboxylesterases, specifically catalyzing intramolecular transesterification, but not hydrolysis. Involved in the biosynthesis of tulipalins, defensive chemicals that show antimicrobial activities against a broad range of strains of bacteria and fungi. Substrates are 6-tuliposide A &gt; 6-tuliposide B. The polypeptide is Tuliposide A-converting enzyme b1, amyloplastic (TCEA-B1) (Tulipa gesneriana (Garden tulip)).